A 920-amino-acid polypeptide reads, in one-letter code: Zinc finger MIZ domain-containing protein 2 (920 aa).

Disordered stretches follow at residues 1-22 (MNSM…GSFA) and 54-79 (SQVL…VAGG). The span at 60–79 (PMGPAGSPSGSSMMPGVAGG) shows a compositional bias: low complexity. At Arg-111 the chain carries Omega-N-methylarginine. Disordered regions lie at residues 243–265 (GQRL…RQGV) and 286–391 (PSTA…SPNQ). Asymmetric dimethylarginine occurs at positions 245 and 262. Positions 295 to 304 (PGQPPAPSPS) are enriched in pro residues. The span at 334-354 (EQFNGQGASFNGGSVSYSQPG) shows a compositional bias: polar residues. Residues 366–379 (PSSPLPGNPTPPMT) are compositionally biased toward pro residues. Over residues 380–389 (PSSSVPYMSP) the composition is skewed to low complexity. Residues Lys-402 and Lys-457 each participate in a glycyl lysine isopeptide (Lys-Gly) (interchain with G-Cter in SUMO2) cross-link. The segment at 435–506 (PFRLQHNLAV…TIERGDNKTS (72 aa)) is interaction with AR. The SP-RING-type zinc finger occupies 585 to 671 (GEDGVEQTAI…IYIQNSDYEE (87 aa)). The Zn(2+) site is built by Cys-616, His-618, Cys-639, and Cys-642. A Glycyl lysine isopeptide (Lys-Gly) (interchain with G-Cter in SUMO2) cross-link involves residue Lys-692. A disordered region spans residues 803-920 (SQMAPAGHLD…DDLLSLFENN (118 aa)). The span at 876–890 (AGEAPEPALDLLPEL) shows a compositional bias: low complexity. Over residues 906-920 (PTNNNDDLLSLFENN) the composition is skewed to polar residues.

In terms of assembly, interacts with AR, SMARCA4/BRG1 and SMARCE1/BAF57. Interaction with either SMARCA4 and SMARCE1 enhances AR-mediated transcription. Expressed most abundantly in testis with lower levels in heart, brain, pancreas, prostate and ovary.

The protein resides in the nucleus. Increases ligand-dependent transcriptional activity of AR and other nuclear hormone receptors. This is Zinc finger MIZ domain-containing protein 2 (ZMIZ2) from Homo sapiens (Human).